We begin with the raw amino-acid sequence, 298 residues long: Cytidine deaminase (298 aa).

2 consecutive CMP/dCMP-type deaminase domains span residues T47–S167 and D186–G298. N88–E90 is a binding site for substrate. H101 serves as a coordination point for Zn(2+). The active-site Proton donor is E103. Residues C128 and C131 each contribute to the Zn(2+) site.

This sequence belongs to the cytidine and deoxycytidylate deaminase family. As to quaternary structure, homodimer. It depends on Zn(2+) as a cofactor.

The enzyme catalyses cytidine + H2O + H(+) = uridine + NH4(+). It carries out the reaction 2'-deoxycytidine + H2O + H(+) = 2'-deoxyuridine + NH4(+). Functionally, this enzyme scavenges exogenous and endogenous cytidine and 2'-deoxycytidine for UMP synthesis. The chain is Cytidine deaminase from Shewanella frigidimarina (strain NCIMB 400).